The primary structure comprises 489 residues: Cytochrome P450 2C70 (489 aa).

Residues 1 to 27 form the signal peptide; it reads MALFIFLGIWLSCLVFLFLWNQHHVRR. Position 434 (Cys434) interacts with heme.

The protein belongs to the cytochrome P450 family. Requires heme as cofactor.

Its subcellular location is the endoplasmic reticulum membrane. It is found in the microsome membrane. The enzyme catalyses chenodeoxycholate + reduced [NADPH--hemoprotein reductase] + O2 = alpha-muricholate + oxidized [NADPH--hemoprotein reductase] + H2O + H(+). It catalyses the reaction ursodeoxycholate + reduced [NADPH--hemoprotein reductase] + O2 = beta-muricholate + oxidized [NADPH--hemoprotein reductase] + H2O + H(+). In terms of biological role, a cytochrome P450 monooxygenase involved in muricholic acid (MCA) synthesis. Hydroxylates at the 6-beta position two major bile acids, chenodeoxycholic acid (CDCA) and ursodeoxycholic acid (UDCA) to form alpha-MCA and beta-MCA, respectively. May regulate NR1H4/farnesoid X receptor signaling, as taurine-conjugated MCAs are antagonists of NR1H4. Mechanistically, uses molecular oxygen inserting one oxygen atom into a substrate, and reducing the second into a water molecule, with two electrons provided by NADPH via cytochrome P450 reductase (CPR; NADPH-ferrihemoprotein reductase). This chain is Cytochrome P450 2C70, found in Rattus norvegicus (Rat).